The sequence spans 402 residues: Multidrug resistance protein MdtH (402 aa).

Residues 1–12 are Cytoplasmic-facing; that stretch reads MSRVSQARNLGK. The chain crosses the membrane as a helical span at residues 13-33; that stretch reads YFLLIDNMLVVLGFFVVFPLI. Topologically, residues 34–98 are periplasmic; sequence SIRFVDQMGW…GFATMGIAHE (65 aa). Residues 99-116 traverse the membrane as a helical segment; it reads PWLLWFSCLLSGLGGTLF. Over 117–138 the chain is Cytoplasmic; it reads DPPRSALVVKLIRPQQRCRFFS. Residues 139–159 traverse the membrane as a helical segment; the sequence is LLMMQDSAGAVIGALLGSWLL. The Periplasmic portion of the chain corresponds to 160 to 164; sequence QYDFR. A helical transmembrane segment spans residues 165–185; it reads LVCATGAVLFVLCAAFNAWLL. Residues 186–213 are Cytoplasmic-facing; the sequence is PAWKLSTVRTPVREGMTRVMRDKRFVTY. A helical membrane pass occupies residues 214-234; it reads VLTLAGYYMLAVQVMLMLPIM. The Periplasmic segment spans residues 235-243; the sequence is VNDVAGAPS. The chain crosses the membrane as a helical span at residues 244–264; it reads AVKWMYAIEACLSLTLLYPIA. Residues 265–276 are Cytoplasmic-facing; that stretch reads RWSEKHFRLEHR. The chain crosses the membrane as a helical span at residues 277-297; that stretch reads LMAGLLIMSLSMMPVGMVSGL. At 298-299 the chain is on the periplasmic side; it reads QQ. The helical transmembrane segment at 300-320 threads the bilayer; it reads LFTLICLFYIGSIIAEPARET. Topologically, residues 321–339 are cytoplasmic; the sequence is LSALLADARARGSYMGFSR. The helical transmembrane segment at 340 to 360 threads the bilayer; it reads LGLAIGGAIGYIGGGWLFDLG. Residues 361-367 are Periplasmic-facing; the sequence is KSAHQPE. A helical transmembrane segment spans residues 368–388; it reads LPWMMLGIIGIFTFLALGWQF. Residues 389 to 402 are Cytoplasmic-facing; sequence SQKRATRRLLERDA.

The protein belongs to the major facilitator superfamily. DHA1 family. MdtH (TC 2.A.1.2.21) subfamily.

Its subcellular location is the cell inner membrane. The protein is Multidrug resistance protein MdtH of Shigella sonnei (strain Ss046).